The sequence spans 527 residues: Gustatory receptor for bitter taste 66a (527 aa).

The Cytoplasmic segment spans residues 1 to 46; it reads MAQAEDAVQPLLQQFQQLFFISKIAGILPQDLEKFRSRNLLEKSRN. A helical transmembrane segment spans residues 47–67; sequence GMIYMLSTLILYVVLYNILIY. The Extracellular segment spans residues 68–80; the sequence is SFGEEDRSLKASQ. Residues 81 to 101 form a helical membrane-spanning segment; the sequence is STLTFVIGLFLTYIGLIMMVS. Residues 102 to 144 are Cytoplasmic-facing; the sequence is DQLTALRNQGRIGELYERIRLVDERLYKEGCVMDNSTIGRRIR. Residues 145–165 form a helical membrane-spanning segment; that stretch reads IMLIMTVIFELSILVSTYVKL. Residues 166-174 lie on the Extracellular side of the membrane; sequence VDYSQWMSL. Residues 175-195 traverse the membrane as a helical segment; the sequence is LWIVSAIPTFINTLDKIWFAV. The Cytoplasmic portion of the chain corresponds to 196 to 345; sequence SLYALKERFE…KALNELWSYP (150 aa). Residues 346–366 form a helical membrane-spanning segment; the sequence is ILSLMAYGFLIFTAQLYFLYC. Residues 367–382 are Extracellular-facing; the sequence is ATQYQSIPSLFRSAKN. Residues 383–403 form a helical membrane-spanning segment; that stretch reads PFITVIVLSYTSGKCVYLIYL. Over 404 to 460 the chain is Cytoplasmic; sequence SWKTSQASKRTGISLHKCGVVADDNLLYEIVNHLSLKLLNHSVDFSACGFFTLDMET. The helical transmembrane segment at 461 to 481 threads the bilayer; the sequence is LYGVSGGITSYLIILIQFNLA. Topologically, residues 482-527 are extracellular; it reads AQQAKEAIQTFNSLNDTAGLVGAATDMDNISSTLRDFVTTTMTPAV. N496 and N510 each carry an N-linked (GlcNAc...) asparagine glycan.

The protein belongs to the insect chemoreceptor superfamily. Gustatory receptor (GR) family. Gr66a subfamily. As to expression, taste hairs in labial palps, labral and cibarial sense organs and forelegs. In larvae, is expressed in neurons of the terminal external chemosensory organ, as well as in the dorsal, ventral, and posterior pharyngeal sense organs.

The protein localises to the cell membrane. Functionally, gustatory receptor required for response to the bitter in taste neurons. Gr66a cells respond to bitter compounds such as caffeine, theophylline, threonine or valine. Flies avoid bitter substances, suggesting that Gr66a neuron activity is sufficient to mediate avoidance behavior. Required for sensing and avoiding N,N-Diethyl-meta-toluamide (DEET), the most widely used insect repellent worldwide, as well as to L-canavanine, a plant-derived insecticide. Gr66a neurons are also involved in the sex-specific perception of molecules inducing male avoidance behavior, probably through sensing 7-tricosene (7-T), a male cuticular pheromone and leading to inhibition of male-male courtship. Finally, also plays a role in oviposition behavior, in which females evaluate their environment and choose to lay eggs on substrates they may find aversive in other contexts. In Drosophila melanogaster (Fruit fly), this protein is Gustatory receptor for bitter taste 66a (Gr66a).